A 372-amino-acid chain; its full sequence is sn-glycerol-3-phosphate import ATP-binding protein UgpC (372 aa).

The region spanning 2-233 (LDIQQLVKTY…PASTFVASFI (232 aa)) is the ABC transporter domain. Residue 35–42 (GPSGCGKS) coordinates ATP.

The protein belongs to the ABC transporter superfamily. sn-glycerol-3-phosphate importer (TC 3.A.1.1.3) family. The complex is composed of two ATP-binding proteins (UgpC), two transmembrane proteins (UgpA and UgpE) and a solute-binding protein (UgpB).

It is found in the cell inner membrane. It carries out the reaction sn-glycerol 3-phosphate(out) + ATP + H2O = sn-glycerol 3-phosphate(in) + ADP + phosphate + H(+). Part of the ABC transporter complex UgpBAEC involved in sn-glycerol-3-phosphate (G3P) import. Responsible for energy coupling to the transport system. The chain is sn-glycerol-3-phosphate import ATP-binding protein UgpC from Vibrio vulnificus (strain CMCP6).